A 948-amino-acid chain; its full sequence is UvrABC system protein A (948 aa).

An ATP-binding site is contributed by 42–49; that stretch reads GLSGSGKS. The C4-type zinc finger occupies 262-289; that stretch reads CPVCSYSLPELEPRLFSFNNPMGSCPTC. 2 ABC transporter domains span residues 319 to 596 and 616 to 945; these read WDKR…ENSV and VNPG…KYLK. 649–656 provides a ligand contact to ATP; sequence GVSGSGKS. A C4-type zinc finger spans residues 748–774; it reads CEACQGDGVIKVEMHFLPDVYVPCEVC.

The protein belongs to the ABC transporter superfamily. UvrA family. As to quaternary structure, forms a heterotetramer with UvrB during the search for lesions.

The protein localises to the cytoplasm. The UvrABC repair system catalyzes the recognition and processing of DNA lesions. UvrA is an ATPase and a DNA-binding protein. A damage recognition complex composed of 2 UvrA and 2 UvrB subunits scans DNA for abnormalities. When the presence of a lesion has been verified by UvrB, the UvrA molecules dissociate. The protein is UvrABC system protein A of Neisseria meningitidis serogroup A / serotype 4A (strain DSM 15465 / Z2491).